The following is a 576-amino-acid chain: FtsZ-localized protein C (576 aa).

Interacts with FtsZ filaments.

Its subcellular location is the cytoplasm. The protein localises to the cell inner membrane. Its function is as follows. Membrane anchor for FtsZ. Binds and recruits FtsZ polymers to membranes early in the cell cycle. May also improve the efficiency of cytokinesis through the regulation of cell wall hydrolysis. The sequence is that of FtsZ-localized protein C from Caulobacter vibrioides (strain NA1000 / CB15N) (Caulobacter crescentus).